We begin with the raw amino-acid sequence, 385 residues long: Succinate--CoA ligase [ADP-forming] subunit beta (385 aa).

One can recognise an ATP-grasp domain in the interval 9–243 (KEILSAYGIP…YSQLDTLEIN (235 aa)). ATP contacts are provided by residues Lys-45, 52 to 54 (GRG), Glu-98, Val-101, and Glu-106. Mg(2+) contacts are provided by Asn-198 and Asp-212. Residues Asn-263 and 320 to 322 (GIM) contribute to the substrate site.

The protein belongs to the succinate/malate CoA ligase beta subunit family. Heterotetramer of two alpha and two beta subunits. Mg(2+) is required as a cofactor.

The catalysed reaction is succinate + ATP + CoA = succinyl-CoA + ADP + phosphate. It carries out the reaction GTP + succinate + CoA = succinyl-CoA + GDP + phosphate. The protein operates within carbohydrate metabolism; tricarboxylic acid cycle; succinate from succinyl-CoA (ligase route): step 1/1. In terms of biological role, succinyl-CoA synthetase functions in the citric acid cycle (TCA), coupling the hydrolysis of succinyl-CoA to the synthesis of either ATP or GTP and thus represents the only step of substrate-level phosphorylation in the TCA. The beta subunit provides nucleotide specificity of the enzyme and binds the substrate succinate, while the binding sites for coenzyme A and phosphate are found in the alpha subunit. The polypeptide is Succinate--CoA ligase [ADP-forming] subunit beta (Geobacter sulfurreducens (strain ATCC 51573 / DSM 12127 / PCA)).